The following is a 215-amino-acid chain: Probable nicotinate-nucleotide adenylyltransferase (215 aa).

The protein belongs to the NadD family.

The enzyme catalyses nicotinate beta-D-ribonucleotide + ATP + H(+) = deamido-NAD(+) + diphosphate. It functions in the pathway cofactor biosynthesis; NAD(+) biosynthesis; deamido-NAD(+) from nicotinate D-ribonucleotide: step 1/1. Catalyzes the reversible adenylation of nicotinate mononucleotide (NaMN) to nicotinic acid adenine dinucleotide (NaAD). This Shewanella sp. (strain W3-18-1) protein is Probable nicotinate-nucleotide adenylyltransferase.